Consider the following 1361-residue polypeptide: DNA-directed RNA polymerase subunit beta (1361 aa).

Belongs to the RNA polymerase beta chain family. As to quaternary structure, the RNAP catalytic core consists of 2 alpha, 1 beta, 1 beta' and 1 omega subunit. When a sigma factor is associated with the core the holoenzyme is formed, which can initiate transcription.

The enzyme catalyses RNA(n) + a ribonucleoside 5'-triphosphate = RNA(n+1) + diphosphate. DNA-dependent RNA polymerase catalyzes the transcription of DNA into RNA using the four ribonucleoside triphosphates as substrates. In Saccharophagus degradans (strain 2-40 / ATCC 43961 / DSM 17024), this protein is DNA-directed RNA polymerase subunit beta.